A 271-amino-acid chain; its full sequence is Tryptophan synthase alpha chain (271 aa).

Catalysis depends on proton acceptor residues Glu49 and Asp60.

This sequence belongs to the TrpA family. In terms of assembly, tetramer of two alpha and two beta chains.

The catalysed reaction is (1S,2R)-1-C-(indol-3-yl)glycerol 3-phosphate + L-serine = D-glyceraldehyde 3-phosphate + L-tryptophan + H2O. Its pathway is amino-acid biosynthesis; L-tryptophan biosynthesis; L-tryptophan from chorismate: step 5/5. In terms of biological role, the alpha subunit is responsible for the aldol cleavage of indoleglycerol phosphate to indole and glyceraldehyde 3-phosphate. This is Tryptophan synthase alpha chain from Burkholderia cenocepacia (strain ATCC BAA-245 / DSM 16553 / LMG 16656 / NCTC 13227 / J2315 / CF5610) (Burkholderia cepacia (strain J2315)).